The sequence spans 446 residues: Chromosomal replication initiator protein DnaA (446 aa).

Residues 1-92 (MENISDLWNS…SQAEEEIDLP (92 aa)) form a domain I, interacts with DnaA modulators region. Positions 93–109 (PSKPNAAQDDSNHLPQS) are domain II. Residues 110 to 326 (MLNPKYTFDT…GALIRVVAYS (217 aa)) are domain III, AAA+ region. 4 residues coordinate ATP: Gly154, Gly156, Lys157, and Thr158. The domain IV, binds dsDNA stretch occupies residues 327-446 (SLINKDINAD…QVEEINDILK (120 aa)).

It belongs to the DnaA family. In terms of assembly, oligomerizes as a right-handed, spiral filament on DNA at oriC.

It is found in the cytoplasm. Functionally, plays an essential role in the initiation and regulation of chromosomal replication. ATP-DnaA binds to the origin of replication (oriC) to initiate formation of the DNA replication initiation complex once per cell cycle. Binds the DnaA box (a 9 base pair repeat at the origin) and separates the double-stranded (ds)DNA. Forms a right-handed helical filament on oriC DNA; dsDNA binds to the exterior of the filament while single-stranded (ss)DNA is stabiized in the filament's interior. The ATP-DnaA-oriC complex binds and stabilizes one strand of the AT-rich DNA unwinding element (DUE), permitting loading of DNA polymerase. After initiation quickly degrades to an ADP-DnaA complex that is not apt for DNA replication. Binds acidic phospholipids. The chain is Chromosomal replication initiator protein DnaA from Bacillus cereus (strain 03BB102).